The sequence spans 324 residues: MYG1 protein C694.04c (324 aa).

It belongs to the MYG1 family.

The polypeptide is MYG1 protein C694.04c (Schizosaccharomyces pombe (strain 972 / ATCC 24843) (Fission yeast)).